The chain runs to 256 residues: GTP cyclohydrolase FolE2 (256 aa).

The protein belongs to the GTP cyclohydrolase IV family.

It carries out the reaction GTP + H2O = 7,8-dihydroneopterin 3'-triphosphate + formate + H(+). It functions in the pathway cofactor biosynthesis; 7,8-dihydroneopterin triphosphate biosynthesis; 7,8-dihydroneopterin triphosphate from GTP: step 1/1. Functionally, converts GTP to 7,8-dihydroneopterin triphosphate. This chain is GTP cyclohydrolase FolE2, found in Caldicellulosiruptor saccharolyticus (strain ATCC 43494 / DSM 8903 / Tp8T 6331).